The following is a 39-amino-acid chain: Omega-theraphotoxin-Ba1a (39 aa).

Cystine bridges form between Cys4-Cys25, Cys8-Cys31, and Cys17-Cys36.

This sequence belongs to the neurotoxin 12 (Hwtx-2) family. 06 (TXP1) subfamily. In terms of tissue distribution, expressed by the venom gland.

It is found in the secreted. Its function is as follows. Inhibits voltage-gated calcium channels (Cav) in rat cerebellar granule cells. Has insecticidal activity to crickets (Acheta domesticus). Is not toxic to mice. The protein is Omega-theraphotoxin-Ba1a of Brachypelma albiceps (Mexican golden redrump tarantula).